The primary structure comprises 228 residues: Adapter protein MecA (228 aa).

This sequence belongs to the MecA family. Homodimer.

Functionally, enables the recognition and targeting of unfolded and aggregated proteins to the ClpC protease or to other proteins involved in proteolysis. The protein is Adapter protein MecA of Lacticaseibacillus paracasei (strain ATCC 334 / BCRC 17002 / CCUG 31169 / CIP 107868 / KCTC 3260 / NRRL B-441) (Lactobacillus paracasei).